The sequence spans 171 residues: MTNSTSDFVGVLEADLNGQDLRIGIVQARFNEDHCVALTSACINELLSLGVTQSDIKLVTVPGALEISFALQKMAETGEFDGLIALGAVIRGETYHFELVSNESAASITRISIDSGLPIANGVLTCDTDEQANARVQVKGAECAQAVVEMANLALALTPDIDIEINASEEE.

5-amino-6-(D-ribitylamino)uracil contacts are provided by residues Phe-30, 64-66 (ALE), and 88-90 (AVI). (2S)-2-hydroxy-3-oxobutyl phosphate is bound at residue 93–94 (ET). Residue His-96 is the Proton donor of the active site. Position 121 (Asn-121) interacts with 5-amino-6-(D-ribitylamino)uracil. Position 135 (Arg-135) interacts with (2S)-2-hydroxy-3-oxobutyl phosphate.

It belongs to the DMRL synthase family.

It carries out the reaction (2S)-2-hydroxy-3-oxobutyl phosphate + 5-amino-6-(D-ribitylamino)uracil = 6,7-dimethyl-8-(1-D-ribityl)lumazine + phosphate + 2 H2O + H(+). It participates in cofactor biosynthesis; riboflavin biosynthesis; riboflavin from 2-hydroxy-3-oxobutyl phosphate and 5-amino-6-(D-ribitylamino)uracil: step 1/2. Catalyzes the formation of 6,7-dimethyl-8-ribityllumazine by condensation of 5-amino-6-(D-ribitylamino)uracil with 3,4-dihydroxy-2-butanone 4-phosphate. This is the penultimate step in the biosynthesis of riboflavin. The chain is 6,7-dimethyl-8-ribityllumazine synthase from Polynucleobacter necessarius subsp. necessarius (strain STIR1).